The sequence spans 213 residues: Dimethylamine corrinoid protein 1 (213 aa).

The region spanning 1-90 is the B12-binding N-terminal domain; sequence MSKEELLQEL…LMPEGSASSK (90 aa). The region spanning 91–213 is the B12-binding domain; the sequence is MGVIVNGTVE…AVAKAKELLA (123 aa). A methylcob(III)alamin-binding site is contributed by His104.

Belongs to the methylamine corrinoid protein family.

It participates in one-carbon metabolism; methanogenesis from dimethylamine. Acts as a methyl group carrier between MtbB and MtbA. This chain is Dimethylamine corrinoid protein 1 (mtbC1), found in Methanosarcina acetivorans (strain ATCC 35395 / DSM 2834 / JCM 12185 / C2A).